The chain runs to 2036 residues: Bikaverin polyketide synthase bik1 (2036 aa).

Residues 8-242 (YVFGDQSTPV…YPAPIYGPYH (235 aa)) are N-terminal acylcarrier protein transacylase domain (SAT). The Ketosynthase family 3 (KS3) domain maps to 370 to 801 (ENKIAIIGFS…GGNTSLLLED (432 aa)). Active-site for beta-ketoacyl synthase activity residues include C541, H676, and H718. The segment at 908–1209 (FLFTGQGAQE…LASLRRKEDH (302 aa)) is acyl/malonyl transferases. The active-site For acyl/malonyl transferase activity is S997. The interval 1293 to 1425 (HNVIEQVHGD…CDVAVENPSS (133 aa)) is N-terminal hotdog fold. One can recognise a PKS/mFAS DH domain in the interval 1293–1600 (HNVIEQVHGD…FKKVARKVLE (308 aa)). The product template (PT) domain stretch occupies residues 1295–1599 (VIEQVHGDKR…TFKKVARKVL (305 aa)). Catalysis depends on H1325, which acts as the Proton acceptor; for dehydratase activity. Residues 1452 to 1600 (SAHMMRRGLL…FKKVARKVLE (149 aa)) are C-terminal hotdog fold. The active-site Proton donor; for dehydratase activity is D1511. The interval 1628–1654 (VLTPPSTTSHSVGTTSPPEPTESPVGS) is disordered. Positions 1638-1654 (SVGTTSPPEPTESPVGS) are enriched in low complexity. The Carrier domain occupies 1653-1730 (GSASGLIQKA…DLKSFLGAND (78 aa)). Residue S1690 is modified to O-(pantetheine 4'-phosphoryl)serine. A disordered region spans residues 1733–1758 (FSSSNSEAESSASSAASTSPSDHGDD). A compositionally biased stretch (low complexity) spans 1734–1753 (SSSNSEAESSASSAASTSPS). S1857 acts as the For thioesterase activity in catalysis.

The protein operates within secondary metabolite biosynthesis. Polyketide synthase; part of the gene cluster that mediates the biosynthesis of bikaverin, a red pigment also considered as a mycotoxin. The first stage is catalyzed by the polyketide synthase bik1, which catalyzes the formation of the intermediate SMA76a also knowm as pre-bikaverin. FAD-dependent monooxygenase bik2 might then be responsible for the oxidation of pre-bikaverin to oxo-pre-bikaverin which is in turn methylated by the O-methyltransferase bik3 to me-oxo-pre-bikaverin. A further cycle of oxydation and methylation by bik2 and bik3 leads to the final product of bikaverin, via a nor-bikaverin intermediate. This is Bikaverin polyketide synthase bik1 from Gibberella fujikuroi (strain CBS 195.34 / IMI 58289 / NRRL A-6831) (Bakanae and foot rot disease fungus).